The following is a 292-amino-acid chain: Hypoxia responsive morphology factor A (292 aa).

Positions 48-70 (RRNGRRRNLEYVAQHRRKIARKI) match the Bipartite nuclear localization signal motif. The RNA recognition motif (RRM)-like domain stretch occupies residues 156-186 (GKEHYSLHLSTLPAIRNAFGDVIFDAIERSP).

It belongs to the hrmA family.

The protein resides in the nucleus. Functionally, hypoxia responsive morphology factor that modulates the expression of the subtelomeric hrmA-associated cluster (HAC) containing genes that alter the hyphal surface (such as reduced total chitin or increased beta-glucan exposure) and perturb inter-hyphal interactions within the developing biofilms, resulting in a loss of vertically aligned polarized growing filaments. Consequently, this hypoxia-typic morphotype (called H-MORPH) with altered biofilm architecture leads to increased hypoxia fitness, increased host inflammation, rapid disease progression, and mortality in a murine model of invasive aspergillosis. This Aspergillus fumigatus (strain CBS 144.89 / FGSC A1163 / CEA10) (Neosartorya fumigata) protein is Hypoxia responsive morphology factor A.